The sequence spans 163 residues: Phosphopantetheine adenylyltransferase (163 aa).

Ser-9 serves as a coordination point for substrate. ATP is bound by residues 9–10 and His-17; that span reads SF. Residues Lys-41, Thr-73, and Arg-87 each contribute to the substrate site. ATP-binding positions include 88-90, Glu-98, and 123-129; these read GLR and YSFISSG.

This sequence belongs to the bacterial CoaD family. In terms of assembly, homohexamer. Requires Mg(2+) as cofactor.

The protein resides in the cytoplasm. The enzyme catalyses (R)-4'-phosphopantetheine + ATP + H(+) = 3'-dephospho-CoA + diphosphate. Its pathway is cofactor biosynthesis; coenzyme A biosynthesis; CoA from (R)-pantothenate: step 4/5. Reversibly transfers an adenylyl group from ATP to 4'-phosphopantetheine, yielding dephospho-CoA (dPCoA) and pyrophosphate. The chain is Phosphopantetheine adenylyltransferase from Desulforudis audaxviator (strain MP104C).